Reading from the N-terminus, the 363-residue chain is Pyrimidine monooxygenase RutA (363 aa).

Residues 49 to 50 (IK), Asn-115, Glu-124, 140 to 141 (RY), and Ser-190 each bind FMN.

The protein belongs to the NtaA/SnaA/DszA monooxygenase family. RutA subfamily.

It carries out the reaction uracil + FMNH2 + NADH + O2 = (Z)-3-ureidoacrylate + FMN + NAD(+) + H2O + H(+). It catalyses the reaction thymine + FMNH2 + NADH + O2 = (Z)-2-methylureidoacrylate + FMN + NAD(+) + H2O + H(+). Functionally, catalyzes the pyrimidine ring opening between N-3 and C-4 by an unusual flavin hydroperoxide-catalyzed mechanism, adding oxygen atoms in the process to yield ureidoacrylate peracid, that immediately reacts with FMN forming ureidoacrylate and FMN-N(5)-oxide. The FMN-N(5)-oxide reacts spontaneously with NADH to produce FMN. Requires the flavin reductase RutF to regenerate FMN in vivo. This Escherichia coli O44:H18 (strain 042 / EAEC) protein is Pyrimidine monooxygenase RutA.